The chain runs to 270 residues: Putative F-box protein At3g24700 (270 aa).

The F-box domain maps to 1–45 (MLTDLPLDLESEILSRVPATSLQRLKTTCKRWYALFRDPRFVKKN).

This is Putative F-box protein At3g24700 from Arabidopsis thaliana (Mouse-ear cress).